Reading from the N-terminus, the 159-residue chain is MEKLTEKDKELIRGSWESLGKNKVPHGVVMFSRLFELEPALLNLFHYNTNCSPTQDCLSSPEFLDHVTKVMLVIDAAVSHLDDLHTLEDFLLNLGKKHQAVGVNTQSFAVVGESLLYMLQCSLGHGYTGPLRQAWLNMYTIVVAAMSRGWAKNGEHKTD.

Residues 3-151 (KLTEKDKELI…VVAAMSRGWA (149 aa)) enclose the Globin domain. Heme b is bound by residues His66 and His98.

The protein belongs to the globin family. As to quaternary structure, monomer. Homodimers and homotetramers. Mainly monomeric but also detected as part of homodimers and homotetramers.

The protein resides in the cytoplasm. The protein localises to the cytosol. It localises to the mitochondrion matrix. It catalyses the reaction Fe(III)-heme b-[protein] + nitric oxide + H2O = Fe(II)-heme b-[protein] + nitrite + 2 H(+). Monomeric globin with a bis-histidyl six-coordinate heme-iron atom through which it can bind dioxygen, carbon monoxide and nitric oxide. Could help transport oxygen and increase its availability to the metabolically active neuronal tissues, though its low quantity in tissues as well as its high affinity for dioxygen, which may limit its oxygen-releasing ability, argue against it. The ferrous/deoxygenated form exhibits a nitrite reductase activity and it could produce nitric oxide which in turn inhibits cellular respiration in response to hypoxia. In its ferrous/deoxygenated state, it may also exhibit GDI (Guanine nucleotide Dissociation Inhibitor) activity toward heterotrimeric G-alpha proteins, thereby regulating signal transduction to facilitate neuroprotective responses in the wake of hypoxia and associated oxidative stress. This chain is Neuroglobin-2 (ngb2), found in Oncorhynchus mykiss (Rainbow trout).